We begin with the raw amino-acid sequence, 404 residues long: Tryptophan synthase beta chain (404 aa).

Lys-98 carries the N6-(pyridoxal phosphate)lysine modification.

Belongs to the TrpB family. As to quaternary structure, tetramer of two alpha and two beta chains. Pyridoxal 5'-phosphate serves as cofactor.

The enzyme catalyses (1S,2R)-1-C-(indol-3-yl)glycerol 3-phosphate + L-serine = D-glyceraldehyde 3-phosphate + L-tryptophan + H2O. It participates in amino-acid biosynthesis; L-tryptophan biosynthesis; L-tryptophan from chorismate: step 5/5. Its function is as follows. The beta subunit is responsible for the synthesis of L-tryptophan from indole and L-serine. In Rhodopseudomonas palustris (strain BisB5), this protein is Tryptophan synthase beta chain.